A 361-amino-acid polypeptide reads, in one-letter code: Outer membrane protein P2 (361 aa).

Positions 1 to 20 (MKKTLAALIVGAFAASAANA) are cleaved as a signal peptide.

The protein belongs to the Gram-negative porin family. As to quaternary structure, homotrimer.

It localises to the cell outer membrane. Its function is as follows. Forms pores that allow passive diffusion of small molecules across the outer membrane. This Haemophilus influenzae protein is Outer membrane protein P2 (ompP2).